Here is an 831-residue protein sequence, read N- to C-terminus: Periplasmic nitrate reductase (831 aa).

A signal peptide (tat-type signal) is located at residues 1 to 35 (MTISDSRRTFLKASAAAATASAAGIPLANGTAAEA). One can recognise a 4Fe-4S Mo/W bis-MGD-type domain in the interval 42–98 (IRWDKAACRFCGTGCSVLVGTKEGRVVATQGDPDAPVNRGLNCIKGYFLSKIMYGED). Residues Cys49, Cys52, Cys56, and Cys84 each contribute to the [4Fe-4S] cluster site. Residues Lys86, Gln153, Asn178, Cys182, 215–222 (WGSNMAEM), 246–250 (STYEH), 265–267 (QTD), Met375, Gln379, Asn485, 511–512 (SD), Lys534, Asp561, and 721–730 (TGRVLEHWHS) each bind Mo-bis(molybdopterin guanine dinucleotide). Residue Trp797 participates in substrate binding. Residues Asn805 and Lys822 each coordinate Mo-bis(molybdopterin guanine dinucleotide).

Belongs to the prokaryotic molybdopterin-containing oxidoreductase family. NasA/NapA/NarB subfamily. As to quaternary structure, component of the periplasmic nitrate reductase NapAB complex composed of NapA and NapB. [4Fe-4S] cluster serves as cofactor. It depends on Mo-bis(molybdopterin guanine dinucleotide) as a cofactor. Predicted to be exported by the Tat system. The position of the signal peptide cleavage has not been experimentally proven.

The protein resides in the periplasm. The catalysed reaction is 2 Fe(II)-[cytochrome] + nitrate + 2 H(+) = 2 Fe(III)-[cytochrome] + nitrite + H2O. Catalytic subunit of the periplasmic nitrate reductase complex NapAB. Receives electrons from NapB and catalyzes the reduction of nitrate to nitrite. This is Periplasmic nitrate reductase from Dinoroseobacter shibae (strain DSM 16493 / NCIMB 14021 / DFL 12).